Here is a 363-residue protein sequence, read N- to C-terminus: Aminomethyltransferase (363 aa).

It belongs to the GcvT family. The glycine cleavage system is composed of four proteins: P, T, L and H.

The catalysed reaction is N(6)-[(R)-S(8)-aminomethyldihydrolipoyl]-L-lysyl-[protein] + (6S)-5,6,7,8-tetrahydrofolate = N(6)-[(R)-dihydrolipoyl]-L-lysyl-[protein] + (6R)-5,10-methylene-5,6,7,8-tetrahydrofolate + NH4(+). The glycine cleavage system catalyzes the degradation of glycine. The chain is Aminomethyltransferase from Staphylococcus aureus (strain N315).